Here is a 220-residue protein sequence, read N- to C-terminus: Deoxyribose-phosphate aldolase (220 aa).

Catalysis depends on D92, which acts as the Proton donor/acceptor. K155 functions as the Schiff-base intermediate with acetaldehyde in the catalytic mechanism. Residue K184 is the Proton donor/acceptor of the active site.

It belongs to the DeoC/FbaB aldolase family. DeoC type 1 subfamily.

It localises to the cytoplasm. The enzyme catalyses 2-deoxy-D-ribose 5-phosphate = D-glyceraldehyde 3-phosphate + acetaldehyde. The protein operates within carbohydrate degradation; 2-deoxy-D-ribose 1-phosphate degradation; D-glyceraldehyde 3-phosphate and acetaldehyde from 2-deoxy-alpha-D-ribose 1-phosphate: step 2/2. In terms of biological role, catalyzes a reversible aldol reaction between acetaldehyde and D-glyceraldehyde 3-phosphate to generate 2-deoxy-D-ribose 5-phosphate. This is Deoxyribose-phosphate aldolase from Natranaerobius thermophilus (strain ATCC BAA-1301 / DSM 18059 / JW/NM-WN-LF).